The following is a 224-amino-acid chain: Synaptogyrin-2 (224 aa).

At methionine 1 the chain carries N-acetylmethionine. Residue serine 3 is modified to Phosphoserine. Residues 20–171 (YVSQPQVVTR…LASLAYQRYK (152 aa)) form the MARVEL domain. 4 helical membrane passes run 30-50 (LVSMVLALIVFSCIFGEGYIN), 73-93 (AIGVLAFLASAFFLVVDAFFS), 105-125 (VIGDLLFSALWTFLWFVGFCF), and 147-167 (AAITFSFFSIFSWGVLASLAY).

This sequence belongs to the synaptogyrin family. May be tyrosine phosphorylated by Src. In terms of tissue distribution, ubiquitously expressed with lower expression in brain (at protein level).

The protein localises to the cytoplasmic vesicle membrane. Its subcellular location is the cytoplasmic vesicle. It localises to the secretory vesicle. It is found in the synaptic vesicle membrane. May play a role in regulated exocytosis. In neuronal cells, modulates the localization of synaptophysin/SYP into synaptic-like microvesicles and may therefore play a role in the formation and/or the maturation of this vesicles. May also play a role in GLUT4 storage and transport to the plasma membrane. This is Synaptogyrin-2 from Rattus norvegicus (Rat).